Here is a 207-residue protein sequence, read N- to C-terminus: Small ribosomal subunit protein uS4c (207 aa).

The region spanning 92-156 (MRLDNILFRL…YQSIITKRIE (65 aa)) is the S4 RNA-binding domain.

The protein belongs to the universal ribosomal protein uS4 family. In terms of assembly, part of the 30S ribosomal subunit. Contacts protein S5. The interaction surface between S4 and S5 is involved in control of translational fidelity.

Its subcellular location is the plastid. The protein resides in the chloroplast. In terms of biological role, one of the primary rRNA binding proteins, it binds directly to 16S rRNA where it nucleates assembly of the body of the 30S subunit. With S5 and S12 plays an important role in translational accuracy. The chain is Small ribosomal subunit protein uS4c (rps4) from Equisetum palustre (Marsh horsetail).